The sequence spans 313 residues: tRNA dimethylallyltransferase (313 aa).

13 to 20 (GPTASGKT) contacts ATP. Residue 15-20 (TASGKT) participates in substrate binding. 4 interaction with substrate tRNA regions span residues 38–41 (DSAL), 162–166 (QRLSR), 243–248 (RCVGYR), and 276–283 (KRQITWLR).

This sequence belongs to the IPP transferase family. Monomer. Requires Mg(2+) as cofactor.

The catalysed reaction is adenosine(37) in tRNA + dimethylallyl diphosphate = N(6)-dimethylallyladenosine(37) in tRNA + diphosphate. Catalyzes the transfer of a dimethylallyl group onto the adenine at position 37 in tRNAs that read codons beginning with uridine, leading to the formation of N6-(dimethylallyl)adenosine (i(6)A). This chain is tRNA dimethylallyltransferase, found in Aliivibrio salmonicida (strain LFI1238) (Vibrio salmonicida (strain LFI1238)).